A 112-amino-acid polypeptide reads, in one-letter code: Prothymosin alpha (112 aa).

Met1 is subject to N-acetylmethionine. The tract at residues 1-112 (MSDAAVDTSS…KKQKKTDEDD (112 aa)) is disordered. An N-acetylserine; in Prothymosin alpha, N-terminally processed modification is found at Ser2. Ser2 is subject to Phosphoserine. Thr8 is subject to Phosphothreonine. 2 positions are modified to phosphoserine: Ser9 and Ser10. Phosphothreonine is present on residues Thr13 and Thr14. The segment covering 13-31 (TTKDLKEKKEVVEEAENGR) has biased composition (basic and acidic residues). Lys15 is modified (N6-acetyllysine; alternate). N6-succinyllysine; alternate is present on Lys15. Over residues 43–84 (ENGEQEADNEVDEEEEEGGEEEEEEEEGDGEEEDGDEDEEAE) the composition is skewed to acidic residues. Residues 101-112 (ETKKQKKTDEDD) show a composition bias toward basic and acidic residues. Residue Thr102 is modified to Phosphothreonine. Lys103 is modified (N6-acetyllysine; alternate). Lys103 participates in a covalent cross-link: Glycyl lysine isopeptide (Lys-Gly) (interchain with G-Cter in SUMO2); alternate. Thr108 is modified (phosphothreonine).

It belongs to the pro/parathymosin family. As to quaternary structure, interacts with NUPR1; regulates apoptotic process. In terms of processing, covalently linked to a small RNA of about 20 nucleotides.

It localises to the nucleus. Prothymosin alpha may mediate immune function by conferring resistance to certain opportunistic infections. This is Prothymosin alpha (Ptma) from Rattus norvegicus (Rat).